The following is a 79-amino-acid chain: Large ribosomal subunit protein uL24 (79 aa).

This sequence belongs to the universal ribosomal protein uL24 family. Part of the 50S ribosomal subunit.

Its function is as follows. One of two assembly initiator proteins, it binds directly to the 5'-end of the 23S rRNA, where it nucleates assembly of the 50S subunit. One of the proteins that surrounds the polypeptide exit tunnel on the outside of the subunit. This Lactobacillus gasseri (strain ATCC 33323 / DSM 20243 / BCRC 14619 / CIP 102991 / JCM 1131 / KCTC 3163 / NCIMB 11718 / NCTC 13722 / AM63) protein is Large ribosomal subunit protein uL24.